Reading from the N-terminus, the 260-residue chain is Enoyl-[acyl-carrier-protein] reductase [NADH] FabI (260 aa).

Residues Gly15, 21–22 (SI), Gln42, 66–67 (DV), and Met94 each bind NAD(+). Ala97 provides a ligand contact to substrate. Residues Tyr147 and Tyr157 each act as proton acceptor in the active site. NAD(+) contacts are provided by residues Lys164 and 193–197 (IKTLA).

It belongs to the short-chain dehydrogenases/reductases (SDR) family. FabI subfamily. As to quaternary structure, homotetramer.

The enzyme catalyses a 2,3-saturated acyl-[ACP] + NAD(+) = a (2E)-enoyl-[ACP] + NADH + H(+). It participates in lipid metabolism; fatty acid biosynthesis. Catalyzes the reduction of a carbon-carbon double bond in an enoyl moiety that is covalently linked to an acyl carrier protein (ACP). Involved in the elongation cycle of fatty acid which are used in the lipid metabolism. This Rickettsia conorii (strain ATCC VR-613 / Malish 7) protein is Enoyl-[acyl-carrier-protein] reductase [NADH] FabI (fabI).